Consider the following 229-residue polypeptide: Adenine nucleotide translocase lysine N-methyltransferase (229 aa).

The tract at residues 1–22 (MDQDDPAEALTELREKRLGLLE) is N-terminal sequence (NTS). A helical membrane pass occupies residues 20 to 42 (LLEIVQAAAGSGLAVYTIWALLL). Residues 43 to 77 (QPGFRRVPLRLQVPYVGASARQVENVLSLLRGRPG) are methyltransferase (MTase). Positions 43–77 (QPGFRRVPLRLQVPYVGASARQVENVLSLLRGRPG) are pre-methyltransferase (preMT).

This sequence belongs to the ANT/ATPSC lysine N-methyltransferase family.

Its subcellular location is the mitochondrion membrane. The catalysed reaction is L-lysyl-[protein] + 3 S-adenosyl-L-methionine = N(6),N(6),N(6)-trimethyl-L-lysyl-[protein] + 3 S-adenosyl-L-homocysteine + 3 H(+). Its function is as follows. Mitochondrial protein-lysine N-methyltransferase that trimethylates adenine nucleotide translocases ANT2/SLC25A5 and ANT3/SLC25A6, thereby regulating mitochondrial respiration. Probably also trimethylates ANT1/SLC25A4. In Mus musculus (Mouse), this protein is Adenine nucleotide translocase lysine N-methyltransferase.